The chain runs to 188 residues: dCTP deaminase (188 aa).

Residues 111–116, 135–137, Gln-156, Tyr-170, and Gln-180 each bind dCTP; these read KSTYAR and TLE. The active-site Proton donor/acceptor is Glu-137.

The protein belongs to the dCTP deaminase family. Homotrimer.

It carries out the reaction dCTP + H2O + H(+) = dUTP + NH4(+). It participates in pyrimidine metabolism; dUMP biosynthesis; dUMP from dCTP (dUTP route): step 1/2. Functionally, catalyzes the deamination of dCTP to dUTP. This is dCTP deaminase from Cupriavidus necator (strain ATCC 17699 / DSM 428 / KCTC 22496 / NCIMB 10442 / H16 / Stanier 337) (Ralstonia eutropha).